Reading from the N-terminus, the 426-residue chain is Inhibin beta A chain (426 aa).

Positions 1 to 20 (MPLLWLRGFLLASCWIIVRS) are cleaved as a signal peptide. A propeptide spanning residues 21-310 (SPTPGSEGHS…EDHPHRRRRR (290 aa)) is cleaved from the precursor. Asn-165 carries N-linked (GlcNAc...) asparagine glycosylation. The interval 259–288 (KKKKKEEEGEGKKKGGGEGGAGADEEKEQS) is disordered. Over residues 263–274 (KEEEGEGKKKGG) the composition is skewed to basic and acidic residues. 4 disulfide bridges follow: Cys-314/Cys-322, Cys-321/Cys-391, Cys-350/Cys-423, and Cys-354/Cys-425.

Belongs to the TGF-beta family. In terms of assembly, dimeric, linked by one or more disulfide bonds. Inhibin A is a dimer of alpha/INHA and beta-A/INHBA. Activin A is a homodimer of beta-A/INHBA. Activin AB is a dimer of beta-A/INHBA and beta-B/INHBB. Interacts with FST and FSTL3; these interactions prevent activin A interaction to its type II receptor. Activin A interacts with ACVR2A. Activin A interacts with BMPR2. Inhibin A interacts with ACVR1; this interaction creates a non-signaling complex (NSC) that inhibits ACVR1-mediated BMP signaling. Inhibin A interacts with ACVR2A.

Its subcellular location is the secreted. Functionally, inhibins/activins are involved in regulating a number of diverse functions such as hypothalamic and pituitary hormone secretion, gonadal hormone secretion, germ cell development and maturation, erythroid differentiation, insulin secretion, nerve cell survival, embryonic axial development or bone growth, depending on their subunit composition. Its function is as follows. Activin A is a homodimer of INHBA that plays a role in several essential biological processes including embryonic development, stem cell maintenance and differentiation, haematopoiesis, cell proliferation and tissue fibrosis. Signals through type I (such as ACVR1B or ACVR1C) and type II receptors (such as ACVR2A, ACVR2B or BMPR2) which, upon ligand binding, phosphorylate SMAD2 and SMAD3 intracellular signaling mediators that form a complex with SMAD4, translocate to the nucleus and modulate gene expression. Can also activate alternative non-canonical intracellular signaling pathways including the p38 MAPK, extracellular signal-regulated kinases 1/2 (ERK1/2) and c-Jun N-terminal kinases (JNKs) to modulate cell migration and differentiation. Alternatively, promotes osteoblastic differentiation via ACVRL1-SMAD1/5/9 pathway. In addition, can engage the type I receptor ACVR1 to form an ACVR1-activin A-type II receptor non-signaling complex (NSC) that renders receptors unavailable for engagement with BMPs, hence resulting in an apparent inhibition of ACVR1-mediated BMP signaling. In terms of biological role, inhibin A is a dimer of alpha/INHA and beta-A/INHBA that functions as a feedback regulator in the hypothalamic-pituitary-gonadal (HPG) axis. Inhibits the secretion of FSH from the anterior pituitary gland by acting on pituitary gonadotrope cells. Antagonizes activin A by binding to the proteoglycan, betaglycan, and forming a stable complex with and, thereby, sequestering type II activin receptors while excluding type I receptor. The sequence is that of Inhibin beta A chain (INHBA) from Homo sapiens (Human).